A 549-amino-acid chain; its full sequence is ATP synthase subunit alpha (549 aa).

Residue 172 to 179 (GDRKTGKT) coordinates ATP.

The protein belongs to the ATPase alpha/beta chains family. In terms of assembly, F-type ATPases have 2 components, CF(1) - the catalytic core - and CF(0) - the membrane proton channel. CF(1) has five subunits: alpha(3), beta(3), gamma(1), delta(1), epsilon(1). CF(0) has three main subunits: a(1), b(2) and c(9-12). The alpha and beta chains form an alternating ring which encloses part of the gamma chain. CF(1) is attached to CF(0) by a central stalk formed by the gamma and epsilon chains, while a peripheral stalk is formed by the delta and b chains.

It is found in the cell membrane. The enzyme catalyses ATP + H2O + 4 H(+)(in) = ADP + phosphate + 5 H(+)(out). Functionally, produces ATP from ADP in the presence of a proton gradient across the membrane. The alpha chain is a regulatory subunit. The sequence is that of ATP synthase subunit alpha from Mycobacterium tuberculosis (strain CDC 1551 / Oshkosh).